The primary structure comprises 32 residues: Coenzyme PQQ synthesis protein A (32 aa).

A cross-link (pyrroloquinoline quinone (Glu-Tyr)) is located at residues 16-20; it reads EINMY.

It belongs to the PqqA family.

It functions in the pathway cofactor biosynthesis; pyrroloquinoline quinone biosynthesis. Its function is as follows. Required for coenzyme pyrroloquinoline quinone (PQQ) biosynthesis. PQQ is probably formed by cross-linking a specific glutamate to a specific tyrosine residue and excising these residues from the peptide. This Dinoroseobacter shibae (strain DSM 16493 / NCIMB 14021 / DFL 12) protein is Coenzyme PQQ synthesis protein A.